Consider the following 314-residue polypeptide: Pantothenate synthetase (314 aa).

Methionine 43–histidine 50 is a binding site for ATP. Catalysis depends on histidine 50, which acts as the Proton donor. Glutamine 75 contributes to the (R)-pantoate binding site. Glutamine 75 lines the beta-alanine pocket. The segment at methionine 112–glutamate 131 is disordered. Glycine 161 to aspartate 164 serves as a coordination point for ATP. Residue glutamine 167 coordinates (R)-pantoate. Residues valine 190 and leucine 198 to arginine 201 contribute to the ATP site.

Belongs to the pantothenate synthetase family. In terms of assembly, homodimer.

It is found in the cytoplasm. The catalysed reaction is (R)-pantoate + beta-alanine + ATP = (R)-pantothenate + AMP + diphosphate + H(+). The protein operates within cofactor biosynthesis; (R)-pantothenate biosynthesis; (R)-pantothenate from (R)-pantoate and beta-alanine: step 1/1. Its function is as follows. Catalyzes the condensation of pantoate with beta-alanine in an ATP-dependent reaction via a pantoyl-adenylate intermediate. This chain is Pantothenate synthetase, found in Mycolicibacterium smegmatis (strain ATCC 700084 / mc(2)155) (Mycobacterium smegmatis).